The sequence spans 514 residues: Probable peptidoglycan glycosyltransferase FtsW (514 aa).

Helical transmembrane passes span 45-65, 86-106, 108-128, 137-157, 182-202, 218-238, 301-321, 347-367, and 373-393; these read IGLI…VTSA, IYIV…MQFW, TANP…LLVG, WLAL…FFFT, VVFF…TVVV, LWQF…LIVF, ILAE…ILWM, VGIW…GILP, and LPLV…VALL. Disordered stretches follow at residues 411–437 and 449–501; these read GDNK…RTKH and DYNQ…AGIK.

This sequence belongs to the SEDS family. FtsW subfamily.

It localises to the cell inner membrane. The catalysed reaction is [GlcNAc-(1-&gt;4)-Mur2Ac(oyl-L-Ala-gamma-D-Glu-L-Lys-D-Ala-D-Ala)](n)-di-trans,octa-cis-undecaprenyl diphosphate + beta-D-GlcNAc-(1-&gt;4)-Mur2Ac(oyl-L-Ala-gamma-D-Glu-L-Lys-D-Ala-D-Ala)-di-trans,octa-cis-undecaprenyl diphosphate = [GlcNAc-(1-&gt;4)-Mur2Ac(oyl-L-Ala-gamma-D-Glu-L-Lys-D-Ala-D-Ala)](n+1)-di-trans,octa-cis-undecaprenyl diphosphate + di-trans,octa-cis-undecaprenyl diphosphate + H(+). The protein operates within cell wall biogenesis; peptidoglycan biosynthesis. Peptidoglycan polymerase that is essential for cell division. This is Probable peptidoglycan glycosyltransferase FtsW from Alteromonas naphthalenivorans.